A 662-amino-acid chain; its full sequence is Glutathione hydrolase 7 (662 aa).

Topologically, residues 1–106 (MAAENEASQE…AAECSCRQDG (106 aa)) are cytoplasmic. Residues Ser17, Ser72, Ser79, and Ser83 each carry the phosphoserine modification. The interval 26 to 90 (SFPRLPEDEP…DGSPLRETRK (65 aa)) is disordered. Over residues 72-83 (SSSSEMGSQDGS) the composition is skewed to low complexity. The helical; Signal-anchor for type II membrane protein transmembrane segment at 107 to 127 (LTVIVTACLTFATGVTVALVM) threads the bilayer. Topologically, residues 128 to 662 (QIYFGDPQIF…SPDAAGATIL (535 aa)) are extracellular. N-linked (GlcNAc...) asparagine glycans are attached at residues Asn198, Asn267, Asn283, Asn330, Asn353, Asn394, Asn452, Asn519, Asn523, and Asn586.

It belongs to the gamma-glutamyltransferase family. As to quaternary structure, interacts with TLCD3A. In terms of assembly, heterodimer composed of the light and heavy chains. The active site is located in the light chain. Cleaved by autocatalysis into a large and a small subunit and the autocatalytic cleavage is essential to the functional activation of the enzyme. Widely expressed, but at low level, except in the airway epithelial cells. Detected in brain, heart, kidney, liver, lung, spleen, testis and trachea.

The protein resides in the membrane. It carries out the reaction an N-terminal (5-L-glutamyl)-[peptide] + an alpha-amino acid = 5-L-glutamyl amino acid + an N-terminal L-alpha-aminoacyl-[peptide]. The enzyme catalyses glutathione + H2O = L-cysteinylglycine + L-glutamate. The catalysed reaction is an S-substituted glutathione + H2O = an S-substituted L-cysteinylglycine + L-glutamate. It participates in sulfur metabolism; glutathione metabolism. Functionally, hydrolyzes and transfers gamma-glutamyl moieties from glutathione and other gamma-glutamyl compounds to acceptors. The chain is Glutathione hydrolase 7 from Homo sapiens (Human).